The sequence spans 148 residues: Puroindoline-B (148 aa).

Positions 1-19 are cleaved as a signal peptide; the sequence is MKTLFLLALLALVASTTFA. Residues 20–29 constitute a propeptide that is removed on maturation; the sequence is QYSEVGGWYN.

In terms of processing, five disulfide bonds are present. Endosperm and aleurone layer of developing kernels. In the aleurone layer, mainly localized to starch granules and the surface of the plasma membrane, forming a uniform layer, also abundant in the intercellular space. In the endosperm, mainly localized to starch granules and the plasma membrane, but less abundant in the intercellular space. Not found in roots or coleoptiles.

It localises to the membrane. The protein localises to the secreted. It is found in the extracellular space. Acts as a membranotoxin, probably through its antibacterial and antifungal activities, contributing to the defense mechanism of the plant against predators. Forms monovalent cation-selective ion channels in membranes. Has antibacterial activity against the Gram-positive bacteria S.aureus and C.michiganensis, and the Gram-negative bacteria E.coli, P.syringae pv phaseoli, A.tumefaciens and E.carotovora subsp carotovora. Acts synergistically with PINA against bacteria. Contributes to grain texture and hardness. The protein is Puroindoline-B (PINB) of Triticum aestivum (Wheat).